Consider the following 106-residue polypeptide: EspC protein homolog (106 aa).

This sequence belongs to the EspC family.

The polypeptide is EspC protein homolog (Mycobacterium leprae (strain TN)).